The sequence spans 31 residues: Cliotide T11 (31 aa).

Positions 1–31 (GIPCGESCVFIPCTITALLGCSCKDKVCYKN) form a cross-link, cyclopeptide (Gly-Asn). Intrachain disulfides connect cysteine 4–cysteine 21, cysteine 8–cysteine 23, and cysteine 13–cysteine 28.

Contains 3 disulfide bonds. Post-translationally, this is a cyclic peptide. In terms of tissue distribution, expressed in seed but not in root, nodule, flower, stem, shoot, leaf and pod (at protein level).

Its function is as follows. Probably participates in a plant defense mechanism. This is Cliotide T11 from Clitoria ternatea (Butterfly pea).